Reading from the N-terminus, the 170-residue chain is Shikimate kinase (170 aa).

An ATP-binding site is contributed by 11–16 (LSGKST). A Mg(2+)-binding site is contributed by Ser15. 3 residues coordinate substrate: Asp33, Arg57, and Gly79. Position 119 (Arg119) interacts with ATP. Arg137 is a binding site for substrate.

This sequence belongs to the shikimate kinase family. As to quaternary structure, monomer. Mg(2+) is required as a cofactor.

Its subcellular location is the cytoplasm. It catalyses the reaction shikimate + ATP = 3-phosphoshikimate + ADP + H(+). It participates in metabolic intermediate biosynthesis; chorismate biosynthesis; chorismate from D-erythrose 4-phosphate and phosphoenolpyruvate: step 5/7. Functionally, catalyzes the specific phosphorylation of the 3-hydroxyl group of shikimic acid using ATP as a cosubstrate. This is Shikimate kinase from Clostridium botulinum (strain Kyoto / Type A2).